Consider the following 367-residue polypeptide: 2-aminoethylphosphonate--pyruvate transaminase (367 aa).

The residue at position 194 (Lys-194) is an N6-(pyridoxal phosphate)lysine.

Belongs to the class-V pyridoxal-phosphate-dependent aminotransferase family. PhnW subfamily. Homodimer. It depends on pyridoxal 5'-phosphate as a cofactor.

It catalyses the reaction (2-aminoethyl)phosphonate + pyruvate = phosphonoacetaldehyde + L-alanine. Its function is as follows. Involved in phosphonate degradation. The protein is 2-aminoethylphosphonate--pyruvate transaminase of Salmonella heidelberg (strain SL476).